The chain runs to 230 residues: Sugar fermentation stimulation protein homolog (230 aa).

This sequence belongs to the SfsA family.

In Caldivirga maquilingensis (strain ATCC 700844 / DSM 13496 / JCM 10307 / IC-167), this protein is Sugar fermentation stimulation protein homolog.